We begin with the raw amino-acid sequence, 265 residues long: Probable FAD synthase (265 aa).

The protein belongs to the PAPS reductase family. FAD1 subfamily.

It carries out the reaction FMN + ATP + H(+) = FAD + diphosphate. It functions in the pathway cofactor biosynthesis; FAD biosynthesis; FAD from FMN: step 1/1. Functionally, adenylates FMN to FAD. The polypeptide is Probable FAD synthase (Schizosaccharomyces pombe (strain 972 / ATCC 24843) (Fission yeast)).